Reading from the N-terminus, the 156-residue chain is Small ribosomal subunit protein uS7 (156 aa).

It belongs to the universal ribosomal protein uS7 family. Part of the 30S ribosomal subunit. Contacts proteins S9 and S11.

Functionally, one of the primary rRNA binding proteins, it binds directly to 16S rRNA where it nucleates assembly of the head domain of the 30S subunit. Is located at the subunit interface close to the decoding center, probably blocks exit of the E-site tRNA. This is Small ribosomal subunit protein uS7 from Azorhizobium caulinodans (strain ATCC 43989 / DSM 5975 / JCM 20966 / LMG 6465 / NBRC 14845 / NCIMB 13405 / ORS 571).